The sequence spans 1339 residues: Transcription factor tau subunit sfc3 (1339 aa).

Positions 470-515 are disordered; sequence MESNAEVSPDGMTLLPRKRGRPRKSANISVTSSPIRPSKNENNLPS. Residues 485 to 497 constitute a DNA-binding region (a.T hook); the sequence is PRKRGRPRKSANI. Residues 495-514 are compositionally biased toward polar residues; the sequence is ANISVTSSPIRPSKNENNLP. Phosphoserine is present on residues serine 595 and serine 596. The segment at 791-826 is disordered; it reads RRKSMPAEIKRHKESSETKPVDKEEVKKNEKEKDDP. Over residues 798–826 the composition is skewed to basic and acidic residues; that stretch reads EIKRHKESSETKPVDKEEVKKNEKEKDDP.

As to quaternary structure, component of the TFIIIC complex including sfc1, sfc3, sfc4, sfc6 and sfc7. The subunits are organized in two globular domains, tauA and tauB, connected by a proteolysis-sensitive and flexible linker. Interacts with sfc1, sfc4 and sfc6.

It is found in the nucleus envelope. Functionally, TFIIIC mediates tRNA and 5S RNA gene activation by binding to intragenic promoter elements. Upstream of the transcription start site, TFIIIC assembles the initiation complex TFIIIB-TFIIIC-tDNA, which is sufficient for RNA polymerase III recruitment and function. Part of the tauB domain of TFIIIC that binds boxB DNA promoter sites of tRNA and similar genes. Cooperates with sfc6 in DNA binding. Localizes to chromatin insulator sequence without recruiting RNA polymerase III and plays a role in nuclear organization. The polypeptide is Transcription factor tau subunit sfc3 (Schizosaccharomyces pombe (strain 972 / ATCC 24843) (Fission yeast)).